A 78-amino-acid chain; its full sequence is Large ribosomal subunit protein bL28 (78 aa).

A disordered region spans residues 1–22; sequence MSRVCQVTGKRPMSGNNRSHAM.

Belongs to the bacterial ribosomal protein bL28 family.

This Yersinia pseudotuberculosis serotype O:1b (strain IP 31758) protein is Large ribosomal subunit protein bL28.